A 470-amino-acid chain; its full sequence is Argininosuccinate lyase (470 aa).

This sequence belongs to the lyase 1 family. Argininosuccinate lyase subfamily.

It is found in the cytoplasm. The catalysed reaction is 2-(N(omega)-L-arginino)succinate = fumarate + L-arginine. It participates in amino-acid biosynthesis; L-arginine biosynthesis; L-arginine from L-ornithine and carbamoyl phosphate: step 3/3. The protein is Argininosuccinate lyase of Ehrlichia chaffeensis (strain ATCC CRL-10679 / Arkansas).